The primary structure comprises 329 residues: Cytosolic arginine sensor for mTORC1 subunit 1 (329 aa).

Position 14 is a phosphoserine; by PKB/AKT1 (Ser-14). 2 ACT domains span residues 72–138 and 260–321; these read AEAT…HTLA and GELW…EVLQ. L-arginine is bound by residues 111-112, Gly-274, 280-281, and 300-304; these read SV, IV, and TFNFD.

Belongs to the GATS family. As to quaternary structure, forms homodimers and heterodimers with CASTOR2. Interacts with the GATOR2 complex which is composed of MIOS, SEC13, SEH1L, WDR24 and WDR59; the interaction is negatively regulated by arginine. Interacts with TM4SF5; the interaction is positively regulated by leucine and is negatively regulated by arginine. Phosphorylation at Ser-14 by AKT1, promoting the interaction between CASTOR1 and RNF167. Post-translationally, ubiquitinated by RNF167 via 'Lys-29'-polyubiquitination, leading to its degradation, releasing the GATOR2 complex. Ubiquitination by RNF167 is promoted by phosphorylation at Ser-14 by AKT1. Widely expressed.

The protein localises to the cytoplasm. It is found in the cytosol. Its function is as follows. Functions as an intracellular arginine sensor within the amino acid-sensing branch of the TORC1 signaling pathway. As a homodimer or a heterodimer with CASTOR2, binds and inhibits the GATOR subcomplex GATOR2 and thereby mTORC1. Binding of arginine to CASTOR1 allosterically disrupts the interaction of CASTOR1-containing dimers with GATOR2 which can in turn activate mTORC1 and the TORC1 signaling pathway. This Homo sapiens (Human) protein is Cytosolic arginine sensor for mTORC1 subunit 1.